The sequence spans 639 residues: ATP-dependent zinc metalloprotease FtsH (639 aa).

The Cytoplasmic segment spans residues 1–4 (MNST). Residues 5-25 (VKTIVFWVFILACCILLWQVF) traverse the membrane as a helical segment. The Periplasmic portion of the chain corresponds to 26–104 (QRSSNTGKEQ…TVKDNSGSPW (79 aa)). A helical transmembrane segment spans residues 105–125 (WSILIQFSPVLVLVALWFFMI). Residues 126–639 (RQMQSGGNKA…GLPEGSPSPA (514 aa)) are Cytoplasmic-facing. 196 to 203 (GPPGTGKT) provides a ligand contact to ATP. His418 is a binding site for Zn(2+). Glu419 is a catalytic residue. 2 residues coordinate Zn(2+): His422 and Asp494. Positions 597–639 (KDLPPLKPSGGSGTATTDDVQQVLKPSSDRGAGGLPEGSPSPA) are disordered.

The protein in the central section; belongs to the AAA ATPase family. This sequence in the C-terminal section; belongs to the peptidase M41 family. As to quaternary structure, homohexamer. The cofactor is Zn(2+).

It localises to the cell inner membrane. In terms of biological role, acts as a processive, ATP-dependent zinc metallopeptidase for both cytoplasmic and membrane proteins. Plays a role in the quality control of integral membrane proteins. This chain is ATP-dependent zinc metalloprotease FtsH, found in Acidobacterium capsulatum (strain ATCC 51196 / DSM 11244 / BCRC 80197 / JCM 7670 / NBRC 15755 / NCIMB 13165 / 161).